Consider the following 345-residue polypeptide: Eukaryotic translation initiation factor 3 subunit F (345 aa).

Residues 30-166 form the MPN domain; the sequence is VVIHPQALFS…TRAYISAPVG (137 aa). A disordered region spans residues 308–345; the sequence is GGESGNAESGQRGGQRGGKGGRGGQQRTQDRSGEEARA. Positions 318–331 are enriched in gly residues; sequence QRGGQRGGKGGRGG. Basic and acidic residues predominate over residues 335-345; it reads TQDRSGEEARA.

It belongs to the eIF-3 subunit F family. As to quaternary structure, component of the eukaryotic translation initiation factor 3 (eIF-3) complex.

The protein localises to the cytoplasm. Functionally, component of the eukaryotic translation initiation factor 3 (eIF-3) complex, which is involved in protein synthesis of a specialized repertoire of mRNAs and, together with other initiation factors, stimulates binding of mRNA and methionyl-tRNAi to the 40S ribosome. The eIF-3 complex specifically targets and initiates translation of a subset of mRNAs involved in cell proliferation. The chain is Eukaryotic translation initiation factor 3 subunit F from Aspergillus oryzae (strain ATCC 42149 / RIB 40) (Yellow koji mold).